A 264-amino-acid chain; its full sequence is [LysW]-aminoadipate/[LysW]-glutamate kinase (264 aa).

Residues Gly35–Gly36, Arg62, and Asn167 contribute to the substrate site.

The protein belongs to the acetylglutamate kinase family. LysZ subfamily.

The protein resides in the cytoplasm. The catalysed reaction is [amino-group carrier protein]-C-terminal-N-(1,4-dicarboxybutan-1-yl)-L-glutamine + ATP = [amino-group carrier protein]-C-terminal-N-(1-carboxy-5-phosphooxy-5-oxopentan-1-yl)-L-glutamine + ADP. It carries out the reaction [amino-group carrier protein]-C-terminal-gamma-(L-glutamyl)-L-glutamate + ATP = [amino-group carrier protein]-C-terminal-gamma-(5-phospho-L-glutamyl)-L-glutamate + ADP. It participates in amino-acid biosynthesis; L-lysine biosynthesis via AAA pathway; L-lysine from L-alpha-aminoadipate (Thermus route): step 2/5. It functions in the pathway amino-acid biosynthesis; L-arginine biosynthesis. Its function is as follows. Involved in both the arginine and lysine biosynthetic pathways. Phosphorylates the LysW-bound precursors glutamate (for arginine biosynthesis), respectively alpha-aminoadipate (for lysine biosynthesis). In Saccharolobus islandicus (strain L.S.2.15 / Lassen #1) (Sulfolobus islandicus), this protein is [LysW]-aminoadipate/[LysW]-glutamate kinase.